The chain runs to 983 residues: Importin beta-like protein kap113 (983 aa).

An Importin N-terminal domain is found at 24–96 (AEGHLNNWKK…RCNALLGSIK (73 aa)).

This sequence belongs to the importin beta family.

It is found in the nucleus. Functions as a component of the nuclear pore complex (NPC). NPC components, collectively referred to as nucleoporins (NUPs), can play the role of both NPC structural components and of docking or interaction partners for transiently associated nuclear transport factors. Active directional transport is assured by both, a Phe-Gly (FG) repeat affinity gradient for these transport factors across the NPC and a transport cofactor concentration gradient across the nuclear envelope. Involved in the export of mRNA from the nucleus to the cytoplasm. May play a role in mitotic spindle formation and/or function. The sequence is that of Importin beta-like protein kap113 (kap113) from Schizosaccharomyces pombe (strain 972 / ATCC 24843) (Fission yeast).